The following is a 153-amino-acid chain: Histone H2B.4 (153 aa).

Basic and acidic residues-rich tracts occupy residues 1–10 (MAPKKDEKPA) and 20–54 (AKAE…GEKK). Residues 1 to 60 (MAPKKDEKPATAEAGAEAPAKAEAKPKAEKAAKKAKKEPSKKAAKEPKGDGEKKDKKKKK) are disordered. Lys41 and Lys42 each carry N6-acetyllysine. Lys149 participates in a covalent cross-link: Glycyl lysine isopeptide (Lys-Gly) (interchain with G-Cter in ubiquitin).

The protein belongs to the histone H2B family. As to quaternary structure, the nucleosome is a histone octamer containing two molecules each of H2A, H2B, H3 and H4 assembled in one H3-H4 heterotetramer and two H2A-H2B heterodimers. The octamer wraps approximately 147 bp of DNA. In terms of processing, the N-terminus is blocked. Can be acetylated to form H2BK33ac and H2BK34ac. Acetylated mainly on the ubiquitinated form. Post-translationally, monoubiquitinated to form H2BK143ub1; which is increased during the light period and may give a specific tag for epigenetic transcriptional activation.

The protein resides in the nucleus. The protein localises to the chromosome. In terms of biological role, core component of nucleosome. Nucleosomes wrap and compact DNA into chromatin, limiting DNA accessibility to the cellular machineries which require DNA as a template. Histones thereby play a central role in transcription regulation, DNA repair, DNA replication and chromosomal stability. DNA accessibility is regulated via a complex set of post-translational modifications of histones, also called histone code, and nucleosome remodeling. The protein is Histone H2B.4 of Chlamydomonas reinhardtii (Chlamydomonas smithii).